Here is a 256-residue protein sequence, read N- to C-terminus: tRNA-cytidine(32) 2-sulfurtransferase (256 aa).

The PP-loop motif motif lies at 35 to 40 (SGGKDS). C110, C113, and C201 together coordinate [4Fe-4S] cluster.

This sequence belongs to the TtcA family. In terms of assembly, homodimer. Mg(2+) serves as cofactor. [4Fe-4S] cluster is required as a cofactor.

The protein localises to the cytoplasm. The catalysed reaction is cytidine(32) in tRNA + S-sulfanyl-L-cysteinyl-[cysteine desulfurase] + AH2 + ATP = 2-thiocytidine(32) in tRNA + L-cysteinyl-[cysteine desulfurase] + A + AMP + diphosphate + H(+). It participates in tRNA modification. Functionally, catalyzes the ATP-dependent 2-thiolation of cytidine in position 32 of tRNA, to form 2-thiocytidine (s(2)C32). The sulfur atoms are provided by the cysteine/cysteine desulfurase (IscS) system. The polypeptide is tRNA-cytidine(32) 2-sulfurtransferase (Coxiella burnetii (strain RSA 493 / Nine Mile phase I)).